The primary structure comprises 500 residues: MGLLPVVGITSPALITHKNHANPKIQRHNQSTSETTVSWTSRINLLTRNGRLAEAAKEFSDMTLAGVEPNHITFIALLSGCGDFTSGSEALGDLLHGYACKLGLDRNHVMVGTAIIGMYSKRGRFKKARLVFDYMEDKNSVTWNTMIDGYMRSGQVDNAAKMFDKMPERDLISWTAMINGFVKKGYQEEALLWFREMQISGVKPDYVAIIAALNACTNLGALSFGLWVHRYVLSQDFKNNVRVSNSLIDLYCRCGCVEFARQVFYNMEKRTVVSWNSVIVGFAANGNAHESLVYFRKMQEKGFKPDAVTFTGALTACSHVGLVEEGLRYFQIMKCDYRISPRIEHYGCLVDLYSRAGRLEDALKLVQSMPMKPNEVVIGSLLAACSNHGNNIVLAERLMKHLTDLNVKSHSNYVILSNMYAADGKWEGASKMRRKMKGLGLKKQPGFSSIEIDDCMHVFMAGDNAHVETTYIREVLELISSDLRLQGCVVETLAGDLLNA.

The N-terminal 54 residues, 1–54 (MGLLPVVGITSPALITHKNHANPKIQRHNQSTSETTVSWTSRINLLTRNGRLAE), are a transit peptide targeting the chloroplast. PPR repeat units lie at residues 35–69 (TTVSWTSRINLLTRNGRLAEAAKEFSDMTLAGVEP), 70–106 (NHITFIALLSGCGDFTSGSEALGDLLHGYACKLGLDR), 108–138 (HVMVGTAIIGMYSKRGRFKKARLVFDYMEDK), 139–173 (NSVTWNTMIDGYMRSGQVDNAAKMFDKMPERDLIS), 174–204 (WTAMINGFVKKGYQEEALLWFREMQISGVKP), 205–239 (DYVAIIAALNACTNLGALSFGLWVHRYVLSQDFKN), 240–270 (NVRVSNSLIDLYCRCGCVEFARQVFYNMEKR), 271–305 (TVVSWNSVIVGFAANGNAHESLVYFRKMQEKGFKP), 306–336 (DAVTFTGALTACSHVGLVEEGLRYFQIMKCD), and 342–376 (RIEHYGCLVDLYSRAGRLEDALKLVQSMPMKPNEV). Residues 377-453 (VIGSLLAACS…QPGFSSIEID (77 aa)) are type E motif. A type E(+) motif region spans residues 454–484 (DCMHVFMAGDNAHVETTYIREVLELISSDLR).

It belongs to the PPR family. PCMP-E subfamily.

The protein resides in the plastid. Its subcellular location is the chloroplast. This Arabidopsis thaliana (Mouse-ear cress) protein is Pentatricopeptide repeat-containing protein At1g05750, chloroplastic (PDE247).